Reading from the N-terminus, the 243-residue chain is 1-(5-phosphoribosyl)-5-[(5-phosphoribosylamino)methylideneamino] imidazole-4-carboxamide isomerase (243 aa).

Asp9 serves as the catalytic Proton acceptor. The active-site Proton donor is the Asp131.

Belongs to the HisA/HisF family.

It is found in the cytoplasm. It carries out the reaction 1-(5-phospho-beta-D-ribosyl)-5-[(5-phospho-beta-D-ribosylamino)methylideneamino]imidazole-4-carboxamide = 5-[(5-phospho-1-deoxy-D-ribulos-1-ylimino)methylamino]-1-(5-phospho-beta-D-ribosyl)imidazole-4-carboxamide. It functions in the pathway amino-acid biosynthesis; L-histidine biosynthesis; L-histidine from 5-phospho-alpha-D-ribose 1-diphosphate: step 4/9. In Campylobacter jejuni (strain RM1221), this protein is 1-(5-phosphoribosyl)-5-[(5-phosphoribosylamino)methylideneamino] imidazole-4-carboxamide isomerase.